Reading from the N-terminus, the 212-residue chain is Pyridoxine/pyridoxamine 5'-phosphate oxidase (212 aa).

Residues 9 to 12 and K67 each bind substrate; that span reads RKSY. FMN-binding positions include 62 to 67, 77 to 78, R83, and K84; these read RIVLIK and FT. Substrate contacts are provided by Y124, R128, and S132. FMN-binding positions include 141 to 142 and W185; that span reads QS. 191–193 lines the substrate pocket; sequence RLH. Residue R195 participates in FMN binding.

The protein belongs to the pyridoxamine 5'-phosphate oxidase family. In terms of assembly, homodimer. The cofactor is FMN.

The catalysed reaction is pyridoxamine 5'-phosphate + O2 + H2O = pyridoxal 5'-phosphate + H2O2 + NH4(+). It catalyses the reaction pyridoxine 5'-phosphate + O2 = pyridoxal 5'-phosphate + H2O2. Its pathway is cofactor metabolism; pyridoxal 5'-phosphate salvage; pyridoxal 5'-phosphate from pyridoxamine 5'-phosphate: step 1/1. It participates in cofactor metabolism; pyridoxal 5'-phosphate salvage; pyridoxal 5'-phosphate from pyridoxine 5'-phosphate: step 1/1. Catalyzes the oxidation of either pyridoxine 5'-phosphate (PNP) or pyridoxamine 5'-phosphate (PMP) into pyridoxal 5'-phosphate (PLP). The sequence is that of Pyridoxine/pyridoxamine 5'-phosphate oxidase from Verminephrobacter eiseniae (strain EF01-2).